Here is a 184-residue protein sequence, read N- to C-terminus: Casparian strip membrane protein 3 (184 aa).

The Cytoplasmic segment spans residues 1 to 22; it reads MEGSGEHGETSKGPLSKGVSRG. A helical transmembrane segment spans residues 23 to 43; the sequence is LCILDLIFRVIAVIGTLASAI. Residues 44–72 are Extracellular-facing; that stretch reads AMGTTNQTMPFFTQFVQFKERYSDLPTLT. N49 carries N-linked (GlcNAc...) asparagine glycosylation. Residues 73-93 form a helical membrane-spanning segment; that stretch reads FFVVANSIASAYLIISLPLSI. Over 94–105 the chain is Cytoplasmic; the sequence is VHIIRSRAKYSR. Residues 106–126 traverse the membrane as a helical segment; sequence LILIFFDVAMLALVTAAASAG. The Extracellular segment spans residues 127–159; it reads AAIVYLAHNGNVSANWFAICQQFDSFCERISGS. A glycan (N-linked (GlcNAc...) asparagine) is linked at N137. A helical membrane pass occupies residues 160 to 180; the sequence is LIGSFAAMVVLILLILLSAVA. Residues 181-184 are Cytoplasmic-facing; that stretch reads LARR.

It belongs to the Casparian strip membrane proteins (CASP) family. As to quaternary structure, homodimer and heterodimers.

It is found in the cell membrane. Functionally, regulates membrane-cell wall junctions and localized cell wall deposition. Required for establishment of the Casparian strip membrane domain (CSD) and the subsequent formation of Casparian strips, a cell wall modification of the root endodermis that determines an apoplastic barrier between the intraorganismal apoplasm and the extraorganismal apoplasm and prevents lateral diffusion. The polypeptide is Casparian strip membrane protein 3 (Brachypodium distachyon (Purple false brome)).